Reading from the N-terminus, the 445-residue chain is GTPase Der (445 aa).

2 consecutive EngA-type G domains span residues 3–167 (PVIA…YAGQ) and 180–353 (IKIA…AAAM). GTP contacts are provided by residues 9-16 (GRPNVGKS), 56-60 (DTGGF), 119-122 (NKAE), 186-193 (GRPNVGKS), 233-237 (DTAGL), and 298-301 (NKWD). Residues 354–438 (AKLPTPKLTR…PLRIEFRSSN (85 aa)) form the KH-like domain.

This sequence belongs to the TRAFAC class TrmE-Era-EngA-EngB-Septin-like GTPase superfamily. EngA (Der) GTPase family. Associates with the 50S ribosomal subunit.

Its function is as follows. GTPase that plays an essential role in the late steps of ribosome biogenesis. This Burkholderia vietnamiensis (strain G4 / LMG 22486) (Burkholderia cepacia (strain R1808)) protein is GTPase Der.